A 423-amino-acid chain; its full sequence is Serine hydroxymethyltransferase (423 aa).

(6S)-5,6,7,8-tetrahydrofolate is bound by residues Leu120 and 124 to 126 (GHL). N6-(pyridoxal phosphate)lysine is present on Lys229. Residues Glu245 and 353–355 (SPF) each bind (6S)-5,6,7,8-tetrahydrofolate.

This sequence belongs to the SHMT family. As to quaternary structure, homodimer. It depends on pyridoxal 5'-phosphate as a cofactor.

The protein localises to the cytoplasm. The catalysed reaction is (6R)-5,10-methylene-5,6,7,8-tetrahydrofolate + glycine + H2O = (6S)-5,6,7,8-tetrahydrofolate + L-serine. It functions in the pathway one-carbon metabolism; tetrahydrofolate interconversion. The protein operates within amino-acid biosynthesis; glycine biosynthesis; glycine from L-serine: step 1/1. Functionally, catalyzes the reversible interconversion of serine and glycine with tetrahydrofolate (THF) serving as the one-carbon carrier. This reaction serves as the major source of one-carbon groups required for the biosynthesis of purines, thymidylate, methionine, and other important biomolecules. Also exhibits THF-independent aldolase activity toward beta-hydroxyamino acids, producing glycine and aldehydes, via a retro-aldol mechanism. This Prochlorococcus marinus (strain MIT 9312) protein is Serine hydroxymethyltransferase.